The primary structure comprises 341 residues: tRNA N6-adenosine threonylcarbamoyltransferase (341 aa).

Residues H115 and H119 each coordinate Fe cation. Substrate is bound by residues 138-142 (VVSGG), D171, G184, D188, and N279. D307 is a Fe cation binding site.

It belongs to the KAE1 / TsaD family. Fe(2+) serves as cofactor.

The protein resides in the cytoplasm. It carries out the reaction L-threonylcarbamoyladenylate + adenosine(37) in tRNA = N(6)-L-threonylcarbamoyladenosine(37) in tRNA + AMP + H(+). In terms of biological role, required for the formation of a threonylcarbamoyl group on adenosine at position 37 (t(6)A37) in tRNAs that read codons beginning with adenine. Is involved in the transfer of the threonylcarbamoyl moiety of threonylcarbamoyl-AMP (TC-AMP) to the N6 group of A37, together with TsaE and TsaB. TsaD likely plays a direct catalytic role in this reaction. This Clostridium kluyveri (strain NBRC 12016) protein is tRNA N6-adenosine threonylcarbamoyltransferase.